A 158-amino-acid chain; its full sequence is Probable host range protein 2-1 (158 aa).

Belongs to the poxviridae C7 protein family.

Functionally, plays a role for multiplication of the virus in different cell types. The protein is Probable host range protein 2-1 of Oryctolagus cuniculus (Rabbit).